We begin with the raw amino-acid sequence, 517 residues long: 2-isopropylmalate synthase (517 aa).

Positions 7-269 (VIIFDTTLRD…ETGIDTTQIV (263 aa)) constitute a Pyruvate carboxyltransferase domain. Positions 16, 204, 206, and 240 each coordinate Mn(2+). Positions 395 to 517 (KFISQKISTE…KPKAQGSGTI (123 aa)) are regulatory domain.

It belongs to the alpha-IPM synthase/homocitrate synthase family. LeuA type 1 subfamily. Homodimer. The cofactor is Mn(2+).

It is found in the cytoplasm. The enzyme catalyses 3-methyl-2-oxobutanoate + acetyl-CoA + H2O = (2S)-2-isopropylmalate + CoA + H(+). Its pathway is amino-acid biosynthesis; L-leucine biosynthesis; L-leucine from 3-methyl-2-oxobutanoate: step 1/4. Catalyzes the condensation of the acetyl group of acetyl-CoA with 3-methyl-2-oxobutanoate (2-ketoisovalerate) to form 3-carboxy-3-hydroxy-4-methylpentanoate (2-isopropylmalate). The chain is 2-isopropylmalate synthase from Neisseria meningitidis serogroup A / serotype 4A (strain DSM 15465 / Z2491).